A 239-amino-acid chain; its full sequence is Fatty acid metabolism regulator protein (239 aa).

One can recognise an HTH gntR-type domain in the interval 6–74 (QSPAGFAEEY…HGKPTKVNNF (69 aa)). A DNA-binding region (H-T-H motif) is located at residues 34-53 (ERELSELIGVTRTTLREVLQ).

In terms of assembly, homodimer.

It is found in the cytoplasm. Its function is as follows. Multifunctional regulator of fatty acid metabolism. In Escherichia fergusonii (strain ATCC 35469 / DSM 13698 / CCUG 18766 / IAM 14443 / JCM 21226 / LMG 7866 / NBRC 102419 / NCTC 12128 / CDC 0568-73), this protein is Fatty acid metabolism regulator protein.